Reading from the N-terminus, the 249-residue chain is 5'-nucleotidase SurE (249 aa).

A divalent metal cation-binding residues include aspartate 8, aspartate 9, serine 39, and asparagine 91.

This sequence belongs to the SurE nucleotidase family. The cofactor is a divalent metal cation.

The protein localises to the cytoplasm. It carries out the reaction a ribonucleoside 5'-phosphate + H2O = a ribonucleoside + phosphate. Nucleotidase that shows phosphatase activity on nucleoside 5'-monophosphates. The polypeptide is 5'-nucleotidase SurE (Pseudomonas paraeruginosa (strain DSM 24068 / PA7) (Pseudomonas aeruginosa (strain PA7))).